A 151-amino-acid chain; its full sequence is Deoxyuridine 5'-triphosphate nucleotidohydrolase (151 aa).

Substrate is bound by residues R70 to G72, N83, L87 to D89, and M97.

It belongs to the dUTPase family. Mg(2+) serves as cofactor.

The catalysed reaction is dUTP + H2O = dUMP + diphosphate + H(+). Its pathway is pyrimidine metabolism; dUMP biosynthesis; dUMP from dCTP (dUTP route): step 2/2. Its function is as follows. This enzyme is involved in nucleotide metabolism: it produces dUMP, the immediate precursor of thymidine nucleotides and it decreases the intracellular concentration of dUTP so that uracil cannot be incorporated into DNA. The sequence is that of Deoxyuridine 5'-triphosphate nucleotidohydrolase from Glaesserella parasuis serovar 5 (strain SH0165) (Haemophilus parasuis).